A 461-amino-acid polypeptide reads, in one-letter code: Thyroid hormone receptor beta (461 aa).

Residues 1-24 are disordered; it reads MTPNSMTENRLPAWDKQKPHPDRG. Positions 1–106 are modulating; the sequence is MTPNSMTENR…IPSYLDKDEL (106 aa). Over residues 13–24 the composition is skewed to basic and acidic residues; that stretch reads AWDKQKPHPDRG. 8 residues coordinate Zn(2+): cysteine 107, cysteine 110, cysteine 124, cysteine 127, cysteine 145, cysteine 151, cysteine 161, and cysteine 164. 2 NR C4-type zinc fingers span residues 107 to 127 and 145 to 169; these read CVVC…CEGC and CKYE…FKKC. A DNA-binding region (nuclear receptor) is located at residues 107–181; sequence CVVCGDKATG…VGMATDLVLD (75 aa). The region spanning 217 to 461 is the NR LBD domain; sequence EEWELIKTVT…PPLFLEVFED (245 aa). Positions 244–461 are interaction with NR2F6; it reads KFLPEDIGQA…PPLFLEVFED (218 aa). The 3,3',5-triiodo-L-thyronine site is built by arginine 282, asparagine 331, and histidine 435. The L-thyroxine site is built by arginine 282, asparagine 331, and histidine 435.

The protein belongs to the nuclear hormone receptor family. NR1 subfamily. In terms of assembly, binds DNA as a dimer; homodimer and heterodimer with RXRA. Interacts with the coactivators NCOA1/SRC1, NCOA2/GRIP1, NCOA7 and MED1/TRAP220 in a ligand-inducible manner. Interacts with the corepressor NCOR1 in absence of ligand. Interacts with C1D. Interacts with NR2F6; the interaction impairs the binding of the THRB homodimer and THRB:RXRB heterodimer to T3 response elements. Interacts with PRMT2 and THRSP. Interacts with TACC1; this interaction is decreased in the presence of thyroid hormone T3.

It localises to the nucleus. In terms of biological role, nuclear hormone receptor that can act as a repressor or activator of transcription. High affinity receptor for thyroid hormones, including triiodothyronine and thyroxine. In Rattus norvegicus (Rat), this protein is Thyroid hormone receptor beta (Thrb).